A 743-amino-acid polypeptide reads, in one-letter code: Cap-specific mRNA (nucleoside-2'-O-)-methyltransferase 2 (743 aa).

Residues 113–326 (ELCTQAWAKF…LYIVCLDYQA (214 aa)) enclose the Adrift-type SAM-dependent 2'-O-MTase domain. K121 is a catalytic residue. 3 residues coordinate S-adenosyl-L-methionine: G152, W171, and D239. Residue D239 is part of the active site. Catalysis depends on K279, which acts as the Proton acceptor.

The protein localises to the nucleus. It is found in the cytoplasm. It catalyses the reaction a 5'-end (N(7)-methyl 5'-triphosphoguanosine)-(2'-O-methyl-ribonucleoside)-(ribonucleotide) in mRNA + S-adenosyl-L-methionine = a 5'-end (N(7)-methyl 5'-triphosphoguanosine)-(2'-O-methyl-ribonucleoside)-(2'-O-methyl-ribonucleotide) in mRNA + S-adenosyl-L-homocysteine + H(+). S-adenosyl-L-methionine-dependent methyltransferase that mediates mRNA cap2 2'-O-ribose methylation to the 5'-cap structure of mRNAs. Methylates the ribose of the second nucleotide of a m(7)GpppG-capped mRNA and small nuclear RNA (snRNA) (cap0) to produce m(7)GpppRmpNm (cap2). The protein is Cap-specific mRNA (nucleoside-2'-O-)-methyltransferase 2 (cmtr2) of Danio rerio (Zebrafish).